The following is a 621-amino-acid chain: tRNA 5-methylaminomethyl-2-thiouridine biosynthesis bifunctional protein MnmC (621 aa).

Residues 1–222 (MKNANLSFKG…KRQMSSAVLE (222 aa)) form a tRNA (mnm(5)s(2)U34)-methyltransferase region. The tract at residues 250 to 621 (IGTGVAGLAT…LIRKLKKGLK (372 aa)) is FAD-dependent cmnm(5)s(2)U34 oxidoreductase.

It in the N-terminal section; belongs to the methyltransferase superfamily. tRNA (mnm(5)s(2)U34)-methyltransferase family. This sequence in the C-terminal section; belongs to the DAO family. It depends on FAD as a cofactor.

It localises to the cytoplasm. It catalyses the reaction 5-aminomethyl-2-thiouridine(34) in tRNA + S-adenosyl-L-methionine = 5-methylaminomethyl-2-thiouridine(34) in tRNA + S-adenosyl-L-homocysteine + H(+). Its function is as follows. Catalyzes the last two steps in the biosynthesis of 5-methylaminomethyl-2-thiouridine (mnm(5)s(2)U) at the wobble position (U34) in tRNA. Catalyzes the FAD-dependent demodification of cmnm(5)s(2)U34 to nm(5)s(2)U34, followed by the transfer of a methyl group from S-adenosyl-L-methionine to nm(5)s(2)U34, to form mnm(5)s(2)U34. The chain is tRNA 5-methylaminomethyl-2-thiouridine biosynthesis bifunctional protein MnmC from Campylobacter concisus (strain 13826).